Consider the following 547-residue polypeptide: 2-succinyl-5-enolpyruvyl-6-hydroxy-3-cyclohexene-1-carboxylate synthase (547 aa).

Belongs to the TPP enzyme family. MenD subfamily. In terms of assembly, homodimer. Requires Mg(2+) as cofactor. Mn(2+) is required as a cofactor. The cofactor is thiamine diphosphate.

The enzyme catalyses isochorismate + 2-oxoglutarate + H(+) = 5-enolpyruvoyl-6-hydroxy-2-succinyl-cyclohex-3-ene-1-carboxylate + CO2. It functions in the pathway quinol/quinone metabolism; 1,4-dihydroxy-2-naphthoate biosynthesis; 1,4-dihydroxy-2-naphthoate from chorismate: step 2/7. The protein operates within quinol/quinone metabolism; menaquinone biosynthesis. Its function is as follows. Catalyzes the thiamine diphosphate-dependent decarboxylation of 2-oxoglutarate and the subsequent addition of the resulting succinic semialdehyde-thiamine pyrophosphate anion to isochorismate to yield 2-succinyl-5-enolpyruvyl-6-hydroxy-3-cyclohexene-1-carboxylate (SEPHCHC). In Mycobacterium sp. (strain JLS), this protein is 2-succinyl-5-enolpyruvyl-6-hydroxy-3-cyclohexene-1-carboxylate synthase.